A 580-amino-acid chain; its full sequence is MGSTRFFLADLPTRTSESDLQILFQDYGHVEHVDLKRKEQDGATKVIAFVTVQTDDAQYCVNELKWQKLHGEKLRVSLAKESFLDRLKREREENQRREQGEPDESEVRAPSSQLLVQSGQNKRRVFGEDEEIGDDEVAPELLITKKRAANSMHNGRIVIQQEHDVKPLHVIEQHRKAAKQKPDANVSQAEQKRKESLNKMRQGHQQKKSAIQQALSVISVEGSQAKRIKFSDAEEEEASKPVQKAKIQKRDLFENDDDEEEEQIVLPQHKGKKGERLVEMQSKQSIDPRFRITSNFVNEEEEAELEDQPEPEESERKWHMNILEQVVGHAITSANDKDGKSPKNKKMLRFDPAKEGHQKLMRQKQPKEEEEKKEETSSTKAKTADAGNSQASAVSKTAFYIVTDTLRDSLNTRGEGFSLLDMFGSAPEKEVAKRQDQLEKLGHEKILVGKTSANKLGLATLNPFSYDSSDSEDETEVKPKQEQEQEQELEVSKENKAQPAKKSGQKRNKNKLESFFIPRNDPRLKEGAKFFKSTKAVVDHAEYDQVKNRLKLLITKKIAKAKKSLPSKDIKLQRNKKGKN.

One can recognise an RRM domain in the interval 4–81; that stretch reads TRFFLADLPT…EKLRVSLAKE (78 aa). Residues 89-100 are compositionally biased toward basic and acidic residues; the sequence is REREENQRREQG. Disordered stretches follow at residues 89–131 and 173–211; these read RERE…EDEE and QHRK…KSAI. A compositionally biased stretch (polar residues) spans 110–120; it reads PSSQLLVQSGQ. Ser231 carries the post-translational modification Phosphoserine. Composition is skewed to acidic residues over residues 254 to 263 and 298 to 313; these read ENDDDEEEEQ and NEEE…EPEE. Disordered regions lie at residues 254-316, 333-395, and 463-520; these read ENDD…ESER, SAND…SAVS, and PFSY…IPRN. Basic and acidic residues-rich tracts occupy residues 348–358 and 365–377; these read LRFDPAKEGHQ and QPKE…EETS. Over residues 386–395 the composition is skewed to polar residues; the sequence is AGNSQASAVS. Ser468 bears the Phosphoserine mark. Thr475 is modified (phosphothreonine).

This is Probable RNA-binding protein CG14230 from Drosophila melanogaster (Fruit fly).